We begin with the raw amino-acid sequence, 268 residues long: MEMO1 family protein Ta0237 (268 aa).

This sequence belongs to the MEMO1 family.

The protein is MEMO1 family protein Ta0237 of Thermoplasma acidophilum (strain ATCC 25905 / DSM 1728 / JCM 9062 / NBRC 15155 / AMRC-C165).